The following is a 528-amino-acid chain: Na(+)/H(+) antiporter NhaB (528 aa).

Transmembrane regions (helical) follow at residues 29 to 49 (LIINPIVFYINPFVAGWLLVI), 52 to 72 (IFTLAMALKCYPLQPGGLLAI), 95 to 115 (VLLLLVFMVAGIYFMKQLLLF), 139 to 159 (AFLSAFLDALTVIAVIIAVAV), 203 to 223 (LLMHAGVGTALGGVCTMVGEP), 248 to 268 (VPVFFAGIFTCFLVEKFKIFG), 304 to 324 (AFIGIWLIVGLALHLASVGLI), 349 to 369 (EEALPFTALLAVFFAVVAVII), 390 to 410 (LVIFYIANGLLSMVSDNVFVG), 448 to 468 (ATPNGQAAFLFLLTSAIAPLI), and 476 to 496 (VWMALPYTIVLSIVGVLAIEL).

This sequence belongs to the NhaB Na(+)/H(+) (TC 2.A.34) antiporter family.

The protein resides in the cell inner membrane. The catalysed reaction is 2 Na(+)(in) + 3 H(+)(out) = 2 Na(+)(out) + 3 H(+)(in). Its function is as follows. Na(+)/H(+) antiporter that extrudes sodium in exchange for external protons. The protein is Na(+)/H(+) antiporter NhaB of Shewanella woodyi (strain ATCC 51908 / MS32).